Consider the following 174-residue polypeptide: Secretory-abundant heat soluble protein 2 (174 aa).

A signal peptide spans 1-19 (MHRFVLALVVFAGAAIVWA). Positions 30–60 (EWTGKPWMGKWESDPSKDENVEEFKKKLQLP) are SAHS-c1. Residues 77 to 105 (YKKGDEYHHKIIINDAHYKNDIVFKLGQE) are SAHS-c2. Residue Asn-111 is glycosylated (N-linked (GlcNAc...) asparagine). The SAHS-c3 stretch occupies residues 118 to 172 (KYEDKDGALVGSVHYTGTKEQSLDKTINNVFKLEGDHLVKTSTIEGVTMKRHYNK).

This sequence belongs to the Secretory-abundant heat soluble protein (SAHS) family.

It is found in the secreted. In terms of biological role, secreted heat soluble protein acting as a molecular shield in water-deficient condition. Tardigrade-specific intrinsically disordered proteins (TDPs) are essential for desiccation tolerance by forming non-crystalline amorphous solids upon desiccation, and this vitrified state mirrors their protective capabilities. This is Secretory-abundant heat soluble protein 2 from Ramazzottius varieornatus (Water bear).